The chain runs to 249 residues: Cyclin-dependent kinase inhibitor 2 (249 aa).

The interval K118–A180 is disordered. Positions A161 to A180 are enriched in polar residues.

It belongs to the CDI family. ICK/KRP subfamily.

This Oryza sativa subsp. japonica (Rice) protein is Cyclin-dependent kinase inhibitor 2 (KRP2).